The chain runs to 372 residues: Glutamate 5-kinase (372 aa).

Lys14 is an ATP binding site. Substrate-binding residues include Ser54, Asp141, and Asn153. 173–174 (TD) lines the ATP pocket. The PUA domain occupies 280-358 (RGHVVIDDGA…GEIESVLGYM (79 aa)).

The protein belongs to the glutamate 5-kinase family.

The protein localises to the cytoplasm. It catalyses the reaction L-glutamate + ATP = L-glutamyl 5-phosphate + ADP. It functions in the pathway amino-acid biosynthesis; L-proline biosynthesis; L-glutamate 5-semialdehyde from L-glutamate: step 1/2. In terms of biological role, catalyzes the transfer of a phosphate group to glutamate to form L-glutamate 5-phosphate. The chain is Glutamate 5-kinase from Paraburkholderia phytofirmans (strain DSM 17436 / LMG 22146 / PsJN) (Burkholderia phytofirmans).